Reading from the N-terminus, the 184-residue chain is Photosystem I assembly protein Ycf4 (184 aa).

Transmembrane regions (helical) follow at residues 22-42 (FCWAVILFLGSLGFLLVGTSS) and 57-77 (ILFFPQGIVMSFYGIAGLFIS).

The protein belongs to the Ycf4 family.

Its subcellular location is the plastid. The protein resides in the chloroplast thylakoid membrane. Its function is as follows. Seems to be required for the assembly of the photosystem I complex. In Panax ginseng (Korean ginseng), this protein is Photosystem I assembly protein Ycf4.